The chain runs to 180 residues: Ribosome maturation factor RimM (180 aa).

Residues 99–179 (NNEYYWKDIV…IVIKNWKQTF (81 aa)) form the PRC barrel domain.

It belongs to the RimM family. In terms of assembly, binds ribosomal protein uS19.

It is found in the cytoplasm. In terms of biological role, an accessory protein needed during the final step in the assembly of 30S ribosomal subunit, possibly for assembly of the head region. Essential for efficient processing of 16S rRNA. May be needed both before and after RbfA during the maturation of 16S rRNA. It has affinity for free ribosomal 30S subunits but not for 70S ribosomes. This Buchnera aphidicola subsp. Baizongia pistaciae (strain Bp) protein is Ribosome maturation factor RimM.